The chain runs to 363 residues: NADH-quinone oxidoreductase subunit H (363 aa).

Helical transmembrane passes span 29–49 (VLKILLIAVPVIVSVAFYVVW), 62–82 (GPMYVGMGIFQAFADVFKLLF), 96–116 (FIIAPLLTLAPAFAAWSVVPF), 127–147 (VGLLYLLAMTSLGVYGIILAG), 163–183 (AAQVVSYEIAMGFALVGVMIA), 202–222 (FFDWFLIPLFPLFIVYWVSGV), 238–257 (EIVAGHMVEYSGGAFALFFL), 278–298 (WLSPIQGWVNADISPWIDWLW), 299–319 (KGGWPWLLMKVFFFASAYIWF), and 339–359 (FIPLTIVWIAVTALMVFYGVI).

This sequence belongs to the complex I subunit 1 family. In terms of assembly, NDH-1 is composed of 14 different subunits. Subunits NuoA, H, J, K, L, M, N constitute the membrane sector of the complex.

It is found in the cell inner membrane. The catalysed reaction is a quinone + NADH + 5 H(+)(in) = a quinol + NAD(+) + 4 H(+)(out). NDH-1 shuttles electrons from NADH, via FMN and iron-sulfur (Fe-S) centers, to quinones in the respiratory chain. The immediate electron acceptor for the enzyme in this species is believed to be ubiquinone. Couples the redox reaction to proton translocation (for every two electrons transferred, four hydrogen ions are translocated across the cytoplasmic membrane), and thus conserves the redox energy in a proton gradient. This subunit may bind ubiquinone. This Xanthomonas oryzae pv. oryzae (strain MAFF 311018) protein is NADH-quinone oxidoreductase subunit H.